The sequence spans 417 residues: Type IV inositol polyphosphate 5-phosphatase 9 (417 aa).

Catalytic stretches follow at residues 258-273 (DRVIFLGDLNYRISLP) and 339-354 (KKRAPAWCDRIIWYGN).

This sequence belongs to the inositol polyphosphate 5-phosphatase family. Specifically expressed in roots.

It carries out the reaction a 1,2-diacyl-sn-glycero-3-phospho-(1D-myo-inositol-4,5-bisphosphate) + H2O = a 1,2-diacyl-sn-glycero-3-phospho-(1D-myo-inositol 4-phosphate) + phosphate. The catalysed reaction is a 1,2-diacyl-sn-glycero-3-phospho-(1D-myo-inositol-3,4,5-trisphosphate) + H2O = a 1,2-diacyl-sn-glycero-3-phospho-(1D-myo-inositol-3,4-bisphosphate) + phosphate. Its function is as follows. Has phosphatase activity toward PtdIns(4,5)P2 and at a lower extent toward PtdIns(3,4,5)P3 but not toward Ins(1,4,5)P3. Functions in salt stress response by regulating reactive oxygen species (ROS) production, endocytosis, Ca(2+) influx and stress-responsive genes expression. This chain is Type IV inositol polyphosphate 5-phosphatase 9, found in Arabidopsis thaliana (Mouse-ear cress).